A 518-amino-acid chain; its full sequence is Retinal dehydrogenase 2 (518 aa).

Phosphotyrosine is present on Tyr168. Residues Ile184–Trp186, Lys210–Glu213, and Ser264–Glu266 contribute to the NAD(+) site. Glu286 serves as the catalytic Proton acceptor. Residue Cys320 is the Nucleophile of the active site. A Phosphoserine modification is found at Ser351. Residues Lys366–Lys370 and Glu417 contribute to the NAD(+) site.

This sequence belongs to the aldehyde dehydrogenase family. Homotetramer.

Its subcellular location is the cytoplasm. It catalyses the reaction retinal + NAD(+) + H2O = retinoate + NADH + 2 H(+). It carries out the reaction all-trans-retinal + NAD(+) + H2O = all-trans-retinoate + NADH + 2 H(+). The catalysed reaction is all-trans-13,14-dihydroretinal + NAD(+) + H2O = all-trans-13,14-dihydroretinoate + NADH + 2 H(+). Its pathway is cofactor metabolism; retinol metabolism. Functionally, catalyzes the NAD-dependent oxidation of aldehyde substrates, such as all-trans-retinal and all-trans-13,14-dihydroretinal, to their corresponding carboxylic acids, all-trans-retinoate and all-trans-13,14-dihydroretinoate, respectively. Retinoate signaling is critical for the transcriptional control of many genes, for instance it is crucial for initiation of meiosis in both male and female. Recognizes retinal as substrate, both in its free form and when bound to cellular retinol-binding protein. Can metabolize octanal and decanal, but has only very low activity with benzaldehyde, acetaldehyde and propanal. Displays complete lack of activity with citral. This chain is Retinal dehydrogenase 2 (ALDH1A2), found in Homo sapiens (Human).